The sequence spans 78 residues: Probable [Fe-S]-dependent transcriptional repressor (78 aa).

Iron-sulfur cluster-binding residues include C56, C61, C64, and C70.

Belongs to the FeoC family.

Functionally, may function as a transcriptional regulator that controls feoABC expression. The protein is Probable [Fe-S]-dependent transcriptional repressor of Salmonella heidelberg (strain SL476).